Here is a 219-residue protein sequence, read N- to C-terminus: Ribose-5-phosphate isomerase A (219 aa).

Substrate is bound by residues 28–31, 81–84, and 94–97; these read TGST, DGAD, and KGGG. The active-site Proton acceptor is the Glu-103. Lys-121 is a binding site for substrate.

It belongs to the ribose 5-phosphate isomerase family. In terms of assembly, homodimer.

It carries out the reaction aldehydo-D-ribose 5-phosphate = D-ribulose 5-phosphate. The protein operates within carbohydrate degradation; pentose phosphate pathway; D-ribose 5-phosphate from D-ribulose 5-phosphate (non-oxidative stage): step 1/1. Its function is as follows. Catalyzes the reversible conversion of ribose-5-phosphate to ribulose 5-phosphate. The polypeptide is Ribose-5-phosphate isomerase A (Photorhabdus laumondii subsp. laumondii (strain DSM 15139 / CIP 105565 / TT01) (Photorhabdus luminescens subsp. laumondii)).